The primary structure comprises 332 residues: Ferrochelatase (332 aa).

Fe cation is bound by residues His201 and Glu283.

It belongs to the ferrochelatase family.

The protein localises to the cytoplasm. It carries out the reaction heme b + 2 H(+) = protoporphyrin IX + Fe(2+). It participates in porphyrin-containing compound metabolism; protoheme biosynthesis; protoheme from protoporphyrin-IX: step 1/1. Its function is as follows. Catalyzes the ferrous insertion into protoporphyrin IX. This chain is Ferrochelatase, found in Francisella tularensis subsp. holarctica (strain FTNF002-00 / FTA).